The following is a 370-amino-acid chain: Putative glutamate--cysteine ligase 2 (370 aa).

This sequence belongs to the glutamate--cysteine ligase type 2 family. YbdK subfamily.

The catalysed reaction is L-cysteine + L-glutamate + ATP = gamma-L-glutamyl-L-cysteine + ADP + phosphate + H(+). In terms of biological role, ATP-dependent carboxylate-amine ligase which exhibits weak glutamate--cysteine ligase activity. The protein is Putative glutamate--cysteine ligase 2 of Janthinobacterium sp. (strain Marseille) (Minibacterium massiliensis).